The following is a 428-amino-acid chain: Serine--tRNA ligase (428 aa).

235-237 (TAE) provides a ligand contact to L-serine. 266–268 (RSE) is an ATP binding site. Glu-289 provides a ligand contact to L-serine. Position 353 to 356 (353 to 356 (EISS)) interacts with ATP. Ser-389 contacts L-serine.

It belongs to the class-II aminoacyl-tRNA synthetase family. Type-1 seryl-tRNA synthetase subfamily. As to quaternary structure, homodimer. The tRNA molecule binds across the dimer.

The protein resides in the cytoplasm. The catalysed reaction is tRNA(Ser) + L-serine + ATP = L-seryl-tRNA(Ser) + AMP + diphosphate + H(+). It carries out the reaction tRNA(Sec) + L-serine + ATP = L-seryl-tRNA(Sec) + AMP + diphosphate + H(+). It functions in the pathway aminoacyl-tRNA biosynthesis; selenocysteinyl-tRNA(Sec) biosynthesis; L-seryl-tRNA(Sec) from L-serine and tRNA(Sec): step 1/1. Functionally, catalyzes the attachment of serine to tRNA(Ser). Is also able to aminoacylate tRNA(Sec) with serine, to form the misacylated tRNA L-seryl-tRNA(Sec), which will be further converted into selenocysteinyl-tRNA(Sec). This Pasteurella multocida (strain Pm70) protein is Serine--tRNA ligase.